Consider the following 333-residue polypeptide: Holliday junction branch migration complex subunit RuvB (333 aa).

The tract at residues 1 to 182 is large ATPase domain (RuvB-L); the sequence is MEERLVSGDV…FGVISRLEYY (182 aa). Residues L21, R22, G63, K66, T67, T68, 129–131, R172, Y182, and R219 contribute to the ATP site; that span reads EDY. Residue T67 participates in Mg(2+) binding. A small ATPAse domain (RuvB-S) region spans residues 183–253; that stretch reads TTEHLTQIVM…LAKEALELLQ (71 aa). Residues 256–333 are head domain (RuvB-H); that stretch reads RLGLDHIDHK…EHFGMEVPKQ (78 aa). DNA-binding residues include R311 and R316.

The protein belongs to the RuvB family. In terms of assembly, homohexamer. Forms an RuvA(8)-RuvB(12)-Holliday junction (HJ) complex. HJ DNA is sandwiched between 2 RuvA tetramers; dsDNA enters through RuvA and exits via RuvB. An RuvB hexamer assembles on each DNA strand where it exits the tetramer. Each RuvB hexamer is contacted by two RuvA subunits (via domain III) on 2 adjacent RuvB subunits; this complex drives branch migration. In the full resolvosome a probable DNA-RuvA(4)-RuvB(12)-RuvC(2) complex forms which resolves the HJ.

Its subcellular location is the cytoplasm. It catalyses the reaction ATP + H2O = ADP + phosphate + H(+). In terms of biological role, the RuvA-RuvB-RuvC complex processes Holliday junction (HJ) DNA during genetic recombination and DNA repair, while the RuvA-RuvB complex plays an important role in the rescue of blocked DNA replication forks via replication fork reversal (RFR). RuvA specifically binds to HJ cruciform DNA, conferring on it an open structure. The RuvB hexamer acts as an ATP-dependent pump, pulling dsDNA into and through the RuvAB complex. RuvB forms 2 homohexamers on either side of HJ DNA bound by 1 or 2 RuvA tetramers; 4 subunits per hexamer contact DNA at a time. Coordinated motions by a converter formed by DNA-disengaged RuvB subunits stimulates ATP hydrolysis and nucleotide exchange. Immobilization of the converter enables RuvB to convert the ATP-contained energy into a lever motion, pulling 2 nucleotides of DNA out of the RuvA tetramer per ATP hydrolyzed, thus driving DNA branch migration. The RuvB motors rotate together with the DNA substrate, which together with the progressing nucleotide cycle form the mechanistic basis for DNA recombination by continuous HJ branch migration. Branch migration allows RuvC to scan DNA until it finds its consensus sequence, where it cleaves and resolves cruciform DNA. The chain is Holliday junction branch migration complex subunit RuvB from Geobacillus sp. (strain WCH70).